We begin with the raw amino-acid sequence, 184 residues long: Mitochondrial translation release factor in rescue (184 aa).

Residues 1–98 (MSSRSTWALL…HVPSGIVVKC (98 aa)) constitute a mitochondrion transit peptide. Positions 60–124 (ESELEEQFVK…LQEKVDVFYN (65 aa)) are GGQ domain. Residues 74-76 (GGQ) carry the GGQ motif. The residue at position 76 (Gln76) is an N5-methylglutamine. The stretch at 130 to 178 (VHKEKLEAERRKRERKKRAKETLEKKKLLKELREASQNITEKKADADGI) forms a coiled coil. The interval 132-184 (KEKLEAERRKRERKKRAKETLEKKKLLKELREASQNITEKKADADGIPRGFQE) is disordered. A compositionally biased stretch (basic and acidic residues) spans 149–184 (KETLEKKKLLKELREASQNITEKKADADGIPRGFQE).

The protein belongs to the prokaryotic/mitochondrial release factor family. In terms of assembly, interacts (via C-terminus) with MTRES1 (via S4 domain). Associates with mitoribosomal S39 large subunit, peptidyl tRNA and nascent chain. Post-translationally, methylation of glutamine in the GGQ triplet by HEMK1.

The protein localises to the mitochondrion. Functionally, part of a mitoribosome-associated quality control pathway that prevents aberrant translation by responding to interruptions during elongation. As heterodimer with MTRES1, ejects the unfinished nascent chain and peptidyl transfer RNA (tRNA), respectively, from stalled ribosomes. Recruitment of mitoribosome biogenesis factors to these quality control intermediates suggests additional roles for MTRES1 and MTRF during mitoribosome rescue. The protein is Mitochondrial translation release factor in rescue of Mus musculus (Mouse).